The sequence spans 402 residues: Proline-rich protein 25 (402 aa).

3 disordered regions span residues 1-29, 109-255, and 337-371; these read MART…AAAH, TVPG…MVGS, and EAAQ…CPGR. A compositionally biased stretch (low complexity) spans 345 to 355; it reads RRTAPPRRTAS. Pro residues predominate over residues 356 to 367; the sequence is PEPPAPGAPLPA.

The chain is Proline-rich protein 25 (PRR25) from Homo sapiens (Human).